Here is a 256-residue protein sequence, read N- to C-terminus: Omega-amidase YafV (256 aa).

Residues 4–234 form the CN hydrolase domain; it reads LKLTLLQQPL…AAQLDAELSL (231 aa). Glu-42 serves as the catalytic Proton acceptor. The active site involves Lys-107. Cys-141 functions as the Nucleophile in the catalytic mechanism.

This sequence belongs to the carbon-nitrogen hydrolase superfamily. NIT1/NIT2 family.

The catalysed reaction is a monoamide of a dicarboxylate + H2O = a dicarboxylate + NH4(+). In terms of biological role, hydrolyzes alpha-ketoglutaramate (a-KGM) to alpha-ketoglutarate (alpha-KG) and ammonia (specific activity 21 umol/min/mg), has very weak activity on L-glutamine, and no activity on deaminated glutathione (dGSH) or glutathione. May function as a metabolite repair enzyme. The protein is Omega-amidase YafV of Yersinia enterocolitica.